Consider the following 163-residue polypeptide: UPF0478 protein SAB1599c (163 aa).

Residues 7 to 27 form a helical membrane-spanning segment; the sequence is IAGIIAAIAFLILCIGIVAVL.

This sequence belongs to the UPF0478 family.

Its subcellular location is the cell membrane. The protein is UPF0478 protein SAB1599c of Staphylococcus aureus (strain bovine RF122 / ET3-1).